A 688-amino-acid chain; its full sequence is Pentatricopeptide repeat-containing protein At3g18020 (688 aa).

PPR repeat units lie at residues 53-88, 89-123, 124-158, 161-195, 196-230, 231-261, 271-305, 306-340, 341-375, 376-406, 411-445, 446-480, 482-517, 518-552, 553-583, 588-622, and 623-657; these read DRAY…GYRP, DSLN…GFIP, DERT…KKEF, SLTN…GHLP, DVVT…GIRP, NSLT…LWEY, KAAA…ESVN, VEFA…GLKP, RRTS…EFFP, SEYT…MLRK, RTRI…DCRP, DEYT…KFCA, DAVT…KIKP, GVVA…SVTA, DSTT…VIWP, DAFV…GAIP, and NVVC…GQAP.

The protein belongs to the PPR family. P subfamily.

The chain is Pentatricopeptide repeat-containing protein At3g18020 from Arabidopsis thaliana (Mouse-ear cress).